The following is a 236-amino-acid chain: MEHKAPLVEFLGLTFNLSDMLMITITCLIVFIIAVAATRSLQLRPTGMQNFMEWVFDFVRGIINSTMDWQTGGRFLTLGVTLIMYVFVANMLGLPFSVHVNGELWWKSPTADATVTLTLAVMVVALTHYYGVKMKGASDYLRDYTRPVAWLFPLKIIEEFANTLTLGLRLFGNIYAGEILLGLLASLGTHYGVLGAVGEHSMMVWQAFSIFVGTIQAFIFTMLTMVYMAHKVSHDH.

5 helical membrane passes run 17 to 37 (LSDM…AVAA), 75 to 95 (FLTL…LGLP), 112 to 132 (DATV…YYGV), 174 to 194 (IYAG…YGVL), and 208 to 228 (FSIF…MVYM).

Belongs to the ATPase A chain family. As to quaternary structure, F-type ATPases have 2 components, CF(1) - the catalytic core - and CF(0) - the membrane proton channel. CF(1) has five subunits: alpha(3), beta(3), gamma(1), delta(1), epsilon(1). CF(0) has three main subunits: a(1), b(2) and c(9-12). The alpha and beta chains form an alternating ring which encloses part of the gamma chain. CF(1) is attached to CF(0) by a central stalk formed by the gamma and epsilon chains, while a peripheral stalk is formed by the delta and b chains.

It localises to the cell membrane. Its function is as follows. Key component of the proton channel; it plays a direct role in the translocation of protons across the membrane. This is ATP synthase subunit a from Geobacillus stearothermophilus (Bacillus stearothermophilus).